Here is a 134-residue protein sequence, read N- to C-terminus: Acyl carrier protein, mitochondrial (134 aa).

The transit peptide at 1–46 (MFRTAALTAARVARPAVASAVRAGVARPAFVQAVPKVAAFQAVRFY) directs the protein to the mitochondrion. Positions 55-131 (DEVFSRIAQV…KAVEYILSQP (77 aa)) constitute a Carrier domain. S91 carries the post-translational modification O-(pantetheine 4'-phosphoryl)serine.

It belongs to the acyl carrier protein (ACP) family. As to quaternary structure, complex I is composed of about 30 different subunits. 4'-phosphopantetheine is transferred from CoA to a specific serine of apo-ACP by acpS. This modification is essential for activity because fatty acids are bound in thioester linkage to the sulfhydryl of the prosthetic group.

The protein resides in the mitochondrion. It functions in the pathway lipid metabolism; fatty acid biosynthesis. In terms of biological role, carrier of the growing fatty acid chain in fatty acid biosynthesis. May be involved in the synthesis of very-long-chain fatty acids. Accessory and non-catalytic subunit of the mitochondrial membrane respiratory chain NADH dehydrogenase (Complex I), which functions in the transfer of electrons from NADH to the respiratory chain. In Neurospora crassa (strain ATCC 24698 / 74-OR23-1A / CBS 708.71 / DSM 1257 / FGSC 987), this protein is Acyl carrier protein, mitochondrial (nuo-12).